We begin with the raw amino-acid sequence, 495 residues long: Cytochrome P450 2B15 (495 aa).

Ser129 bears the Phosphoserine; by PKA mark. A heme-binding site is contributed by Cys437.

This sequence belongs to the cytochrome P450 family. The cofactor is heme.

Its subcellular location is the endoplasmic reticulum membrane. The protein localises to the microsome membrane. It carries out the reaction an organic molecule + reduced [NADPH--hemoprotein reductase] + O2 = an alcohol + oxidized [NADPH--hemoprotein reductase] + H2O + H(+). Cytochromes P450 are a group of heme-thiolate monooxygenases. In liver microsomes, this enzyme is involved in an NADPH-dependent electron transport pathway. It oxidizes a variety of structurally unrelated compounds, including steroids, fatty acids, and xenobiotics. The chain is Cytochrome P450 2B15 (Cyp2b15) from Rattus norvegicus (Rat).